We begin with the raw amino-acid sequence, 326 residues long: Cinnamoyl-CoA reductase CAD2 (326 aa).

NADP(+) is bound by residues Gly-14–Ala-20, Arg-39, Lys-46, Asn-66–Leu-67, and Thr-86–Ser-88. (E)-coniferaldehyde is bound by residues Ser-130, Tyr-136, Arg-141, and Tyr-165. NADP(+) is bound by residues Tyr-165, Lys-169, Pro-192–Val-195, and Ser-207. Residue Lys-169 is the Proton donor of the active site. (E)-coniferaldehyde contacts are provided by Met-194, Ser-207, Phe-226, Val-257, and Tyr-290.

This sequence belongs to the NAD(P)-dependent epimerase/dehydratase family. Dihydroflavonol-4-reductase subfamily.

It localises to the cytoplasm. It catalyses the reaction (E)-cinnamaldehyde + NADP(+) + CoA = (E)-cinnamoyl-CoA + NADPH + H(+). The enzyme catalyses (E)-coniferaldehyde + NADP(+) + CoA = (E)-feruloyl-CoA + NADPH + H(+). It carries out the reaction (E)-4-coumaraldehyde + NADP(+) + CoA = (E)-4-coumaroyl-CoA + NADPH + H(+). It functions in the pathway aromatic compound metabolism; phenylpropanoid biosynthesis. Functionally, involved in lignin biosynthesis. Regulates the monolignol composition by catalyzing the conversion of cinnamoyl-CoAs into their corresponding cinnamaldehydes. Can use coumaraldehyde and coniferaldehyde as substrates, but barely sinapaldehyde. The protein is Cinnamoyl-CoA reductase CAD2 of Medicago truncatula (Barrel medic).